The following is an 813-amino-acid chain: MEEISTPEGGVLVPISIETEVKRAYIDYSMSVIVSRALPDVRDGLKPVHRRILYAMEEKGLRFSGPTRKCAKIVGDVLGSFHPHGDASVYDALVRLGQDFSLRYPVIHPQGNFGTIGGDPPAAYRYTEAKMARIAESMVEDIKKETVSFVPNFDDSDVEPTVLPGRFPFLLANGSSGIAVGMTTNMPPHNLREIAAAISAYIENPNLSIQELCDCINGPDFPTGGIIFGKNGIRQSYETGRGKIVVRARFTIETDSKGRDTIIFTEVPYQVNTTMLVMRIGELARAKVIEGIANVNDETSDRTGLRIVVELKKGTPAQVVLNHLFAKTPLQSSFNVINLALVEGRPRMLTLKDLVRYFVEHRVDVVTRRAHFELRKAQERIHLVRALIRALDAIDKIITLIRHSQNTELAKQRLREQFDFDNVQAQAIVDMQMKRLTGLEVESLRTELKDLTELISSLEELLTSPQKVLGVVKKETRDIADMFGDDRRTDIVSNEIEYLDVEDFIQKEEMVILISHLGYIKRVPVSAYRNQNRGGKGSSSANLAAHDFISQIFTASTHDYVMFVTSRGRAYWLKVYGIPESGRANRGSHIKSLLMVATDEEITAIVSLREFSNKSYVFMATARGVVKKVTTDNFVNAKTRGIIALKLSGGDTLVSAVLVQDEDEVMLITRQGKALRMSGREVREMGRNSSGVIGIKLTSEDLVAGVLRVSEQRKVLIMTENGYGKRVSFSEFSVHGRGTAGQKIYTQTDRKGAIIGALAVLDTDECMCITGQGKTIRVDVCAISVLGRGAQGVRVLDIEPSDLVVGLSCVMQG.

Positions L38 to F504 constitute a Topo IIA-type catalytic domain. Catalysis depends on Y126, which acts as the O-(5'-phospho-DNA)-tyrosine intermediate. The short motif at Q531 to G537 is the GyrA-box element.

It belongs to the type II topoisomerase GyrA/ParC subunit family. In terms of assembly, heterotetramer, composed of two GyrA and two GyrB chains. In the heterotetramer, GyrA contains the active site tyrosine that forms a transient covalent intermediate with DNA, while GyrB binds cofactors and catalyzes ATP hydrolysis.

The protein localises to the cytoplasm. It catalyses the reaction ATP-dependent breakage, passage and rejoining of double-stranded DNA.. Its function is as follows. A type II topoisomerase that negatively supercoils closed circular double-stranded (ds) DNA in an ATP-dependent manner to modulate DNA topology and maintain chromosomes in an underwound state. Negative supercoiling favors strand separation, and DNA replication, transcription, recombination and repair, all of which involve strand separation. Also able to catalyze the interconversion of other topological isomers of dsDNA rings, including catenanes and knotted rings. Type II topoisomerases break and join 2 DNA strands simultaneously in an ATP-dependent manner. The chain is DNA gyrase subunit A from Treponema pallidum (strain Nichols).